The chain runs to 532 residues: Glucose-6-phosphate isomerase (532 aa).

Residue Glu322 is the Proton donor of the active site. Catalysis depends on residues His351 and Lys457.

It belongs to the GPI family.

The protein resides in the cytoplasm. It carries out the reaction alpha-D-glucose 6-phosphate = beta-D-fructose 6-phosphate. The protein operates within carbohydrate biosynthesis; gluconeogenesis. Its pathway is carbohydrate degradation; glycolysis; D-glyceraldehyde 3-phosphate and glycerone phosphate from D-glucose: step 2/4. Catalyzes the reversible isomerization of glucose-6-phosphate to fructose-6-phosphate. In Synechococcus sp. (strain JA-3-3Ab) (Cyanobacteria bacterium Yellowstone A-Prime), this protein is Glucose-6-phosphate isomerase.